The following is a 579-amino-acid chain: Potassium-transporting ATPase potassium-binding subunit (579 aa).

Transmembrane regions (helical) follow at residues 2–22 (MNLV…AIPL), 66–86 (SFSV…IHIF), 135–155 (GLTV…FALI), 177–197 (VLYI…SQGV), 262–282 (LSNL…CFTF), 292–312 (GIAI…IIGV), 391–411 (VFGG…LAVF), 437–457 (VLVC…ASIL), 490–510 (FAGF…SMLF), and 546–566 (FIGL…FPAL).

The protein belongs to the KdpA family. As to quaternary structure, the system is composed of three essential subunits: KdpA, KdpB and KdpC.

The protein resides in the cell membrane. Its function is as follows. Part of the high-affinity ATP-driven potassium transport (or Kdp) system, which catalyzes the hydrolysis of ATP coupled with the electrogenic transport of potassium into the cytoplasm. This subunit binds the extracellular potassium ions and delivers the ions to the membrane domain of KdpB through an intramembrane tunnel. The chain is Potassium-transporting ATPase potassium-binding subunit from Clostridium botulinum (strain Alaska E43 / Type E3).